The chain runs to 1020 residues: LLGL scribble cell polarity complex component 2 (1020 aa).

14 WD repeats span residues 36–69 (SALGFSPSLELLAIGTRSGAIKLYGAPGVEFMGL), 76–117 (VTQV…IGRF), 132–169 (VTAVLAHSSGELLLLGTEGGHVFVVEVPGFRELEENNI), 193–227 (TLHENPLNPRQVLIGYSRGLMVLWDLDRQRPVQHF), 233–264 (LESVWWMEDGESILSSHSDGSYCQWTVTGEDP), 282–324 (AISK…KTHE), 332–364 (IIDFFVIREGENHKGEPSALVVLVEEELVVVDL), 386–462 (TCSH…YKLS), 506–581 (QKIH…FALV), 590–651 (TAIA…LRQS), 710–766 (VRTL…KEIQ), 775–827 (GLVV…VSSK), 832–884 (LTAV…VHYP), and 898–921 (VFTKYGQGFYLISPSEFERFSLST). A disordered region spans residues 935–968 (LQMRSKSPSSPVHRDLPDGVPTEHRNFKGDSEGY). Positions 946 to 965 (VHRDLPDGVPTEHRNFKGDS) are enriched in basic and acidic residues.

It belongs to the WD repeat L(2)GL family. Post-translationally, phosphorylated.

The protein resides in the cytoplasm. It localises to the cytoskeleton. Its function is as follows. Essential for hemidesmosome formation and maintenance of the cytoskeleton elements as well as cellular morphology in the basal epidermis during development. Also involved in regulating growth of the basal epidermis. This is LLGL scribble cell polarity complex component 2 (llgl2) from Danio rerio (Zebrafish).